A 726-amino-acid chain; its full sequence is Catalase-peroxidase (726 aa).

The tryptophyl-tyrosyl-methioninium (Trp-Tyr) (with M-240) cross-link spans 91–214; the sequence is WHSAGTYRIA…LGAVQMGLIY (124 aa). The Proton acceptor role is filled by H92. The segment at residues 214-240 is a cross-link (tryptophyl-tyrosyl-methioninium (Tyr-Met) (with W-91)); it reads YVNPEGPNGNPDPLAAARDIRETFARM. H255 provides a ligand contact to heme b. The disordered stretch occupies residues 335 to 362; that stretch reads AHQWRPKAGAGADSVPDPHDPNKRRTPS.

The protein belongs to the peroxidase family. Peroxidase/catalase subfamily. In terms of assembly, homodimer or homotetramer. The cofactor is heme b. In terms of processing, formation of the three residue Trp-Tyr-Met cross-link is important for the catalase, but not the peroxidase activity of the enzyme.

The enzyme catalyses H2O2 + AH2 = A + 2 H2O. The catalysed reaction is 2 H2O2 = O2 + 2 H2O. Bifunctional enzyme with both catalase and broad-spectrum peroxidase activity. The protein is Catalase-peroxidase of Pseudomonas fluorescens (strain ATCC BAA-477 / NRRL B-23932 / Pf-5).